The sequence spans 476 residues: MAMKTSNNRFQDRVTKELENQFMRSAVSRAQDRFQTRRLQQTQELGDWEEWRSHGEEIRKHVLENLDYYLYQLSDNVAKRGGHVFFAQTAQEATAYIQDIAKKKNAAKIVKSKSMVTEEINLNAALEELGCEVIETDLGEYILQVADHEPPSHIVAPALHKNKEQIRDVFKAKQGYTQSEKPEELALYVREKLRDEYLTADIGITGCNFAIAESGSITLVTNEGNADLVTALPKTQVTVMGMERIVPTFEEMEVLVSLLTRSAVGQKLTSYITTLTGIKDEGDTDGPEEFHLVIVDNGRSAILGGEFQPILQCIRCAACVNACPVYRHVGGHTYGSIYSGPLGVVLSPLLGGYDDFKELPYASTLCGACTDACPVKIPLHQLIHRHRQVIVENEGKAPVSEKLLMKAFGLGASSPTLYKMATKMAAPAMAPFTNDHTITKGPGPLKAWTEARDFPAPNKNSFRNWMKHRTKGDEES.

2 consecutive 4Fe-4S ferredoxin-type domains span residues 304 to 334 and 353 to 382; these read GGEF…GHTY and YDDF…LHQL. Residues Cys-313, Cys-316, Cys-319, Cys-323, Cys-366, Cys-369, and Cys-373 each contribute to the [4Fe-4S] cluster site. The disordered stretch occupies residues 452–476; sequence RDFPAPNKNSFRNWMKHRTKGDEES.

It belongs to the LutB/YkgF family.

Functionally, is involved in L-lactate degradation and allows cells to grow with lactate as the sole carbon source. Has probably a role as an electron transporter during oxidation of L-lactate. The sequence is that of Lactate utilization protein B from Lysinibacillus sphaericus (strain C3-41).